We begin with the raw amino-acid sequence, 260 residues long: MRAFWQELEAGPVLQVHQAGEVPYRRAWAWQQVRLAQMIRDPQVPDGLLLLTHPPVYTLGAGADPKFLKSLAGQIGSPDTQPESPVTEGPEILRVERGGEVTYHGPGQWVGYALLNLKRHRTVYGSHGQPDLHRYLRHLEEVLIQTVAHFGLQGERIPGLTGVWVQGHKVAAIGIKVSRWVTYHGFALNVCPDLAAFQAIVPCGIPDRPVGSLVHFCPEVTMAAVAPVLVKSFCQVFGLQAQEVSLSEWLGERKSLKTQG.

In terms of domain architecture, BPL/LPL catalytic spans 42-241 (PQVPDGLLLL…SFCQVFGLQA (200 aa)). Substrate is bound by residues 97–104 (RGGEVTYH), 172–174 (AIG), and 185–187 (GFA). The Acyl-thioester intermediate role is filled by Cys203.

Belongs to the LipB family.

It is found in the cytoplasm. The catalysed reaction is octanoyl-[ACP] + L-lysyl-[protein] = N(6)-octanoyl-L-lysyl-[protein] + holo-[ACP] + H(+). The protein operates within protein modification; protein lipoylation via endogenous pathway; protein N(6)-(lipoyl)lysine from octanoyl-[acyl-carrier-protein]: step 1/2. Catalyzes the transfer of endogenously produced octanoic acid from octanoyl-acyl-carrier-protein onto the lipoyl domains of lipoate-dependent enzymes. Lipoyl-ACP can also act as a substrate although octanoyl-ACP is likely to be the physiological substrate. The chain is Octanoyltransferase from Synechococcus sp. (strain JA-3-3Ab) (Cyanobacteria bacterium Yellowstone A-Prime).